Consider the following 1294-residue polypeptide: Leucine-rich repeat receptor protein kinase MSP1 (1294 aa).

The N-terminal stretch at 1–22 (MVSNSFWLFILLVSFIPISAWA) is a signal peptide. LRR repeat units follow at residues 88 to 112 (FQSLVRLNFSGCGFSGELPEALGNL), 113 to 136 (QNLQYLDLSNNELTGPIPISLYNL), 138 to 160 (MLKEMVLDYNSLSGQLSPAIAQL), 161 to 184 (QHLTKLSISMNSISGSLPPDLGSL), and 186 to 207 (NLELLDIKMNTFNGSIPATFGN). N-linked (GlcNAc...) asparagine glycans are attached at residues asparagine 198, asparagine 207, and asparagine 220. LRR repeat units follow at residues 232–256 (LTNLLTLDLSSNSFEGTIPREIGQL), 258–280 (NLELLILGKNDLTGRIPQEIGSL), 282–304 (QLKLLHLEECQFTGKIPWSISGL), 305–328 (SSLTELDISDNNFDAELPSSMGEL), 330–352 (NLTQLIAKNAGLSGNMPKELGNC), 353–376 (KKLTVINLSFNALIGPIPEEFADL), 378–400 (AIVSFFVEGNKLSGRVPDWIQKW), 401–422 (KNARSIRLGQNKFSGPLPVLPL), 423–446 (QHLLSFAAESNLLSGSIPSHICQA), 447–469 (NSLHSLLLHHNNLTGTIDEAFKG), 471–493 (TNLTELNLLDNHIHGEVPGYLAE), 494–517 (LPLVTLELSQNKFAGMLPAELWES), 519–541 (TLLEISLSNNEITGPIPESIGKL), 542–565 (SVLQRLHIDNNLLEGPIPQSVGDL), 566–589 (RNLTNLSLRGNRLSGIIPLALFNC), 591–613 (KLATLDLSYNNLTGNIPSAISHL), 614–637 (TLLDSLILSSNQLSGSIPAEICVG), 649–673 (LQHHGLLDLSYNQLTGQIPTSIKNC), 675–697 (MVMVLNLQGNLLNGTIPVELGEL), 698–721 (TNLTSINLSFNEFVGPMLPWSGPL), 722–745 (VQLQGLILSNNHLDGSIPAKIGQI), 746–770 (LPKIAVLDLSSNALTGTLPQSLLCN), and 772–794 (YLNHLDVSNNHLSGHIQFSCPDG). Residues asparagine 330 and asparagine 359 are each glycosylated (N-linked (GlcNAc...) asparagine). Residues asparagine 458 and asparagine 472 are each glycosylated (N-linked (GlcNAc...) asparagine). N-linked (GlcNAc...) asparagine glycosylation is found at asparagine 567, asparagine 570, and asparagine 601. N-linked (GlcNAc...) asparagine glycans are attached at residues asparagine 687, asparagine 699, and asparagine 704. N-linked (GlcNAc...) asparagine glycans are attached at residues asparagine 805, asparagine 821, and asparagine 832. LRR repeat units follow at residues 822–846 (FTQLSTLDIHNNSLTGRLPSALSDL) and 848–870 (SLNYLDLSSNNLYGAIPCGICNI). A helical transmembrane segment spans residues 917–937 (ITICAFTFVIIIVLVLLAVYL). The Protein kinase domain maps to 1002 to 1282 (FSKVHIIGDG…KGLKMTHGME (281 aa)). Residues 1008 to 1016 (IGDGGFGTV) and lysine 1030 contribute to the ATP site. Residue aspartate 1129 is the Proton acceptor of the active site.

Belongs to the protein kinase superfamily. Ser/Thr protein kinase family. In terms of assembly, interacts with TDL1A. In terms of tissue distribution, expressed in anthers and ovules during meiosis.

Its subcellular location is the cell membrane. It carries out the reaction L-seryl-[protein] + ATP = O-phospho-L-seryl-[protein] + ADP + H(+). The enzyme catalyses L-threonyl-[protein] + ATP = O-phospho-L-threonyl-[protein] + ADP + H(+). Functionally, receptor-like kinase that plays important roles in restricting the number of cells entering into male and female sporogenesis. Involved in cell specification during anther development and initiation of anther wall formation. The protein is Leucine-rich repeat receptor protein kinase MSP1 of Oryza sativa subsp. japonica (Rice).